We begin with the raw amino-acid sequence, 288 residues long: ATP synthase gamma chain (288 aa).

Belongs to the ATPase gamma chain family. In terms of assembly, F-type ATPases have 2 components, CF(1) - the catalytic core - and CF(0) - the membrane proton channel. CF(1) has five subunits: alpha(3), beta(3), gamma(1), delta(1), epsilon(1). CF(0) has three main subunits: a, b and c.

Its subcellular location is the cell inner membrane. Its function is as follows. Produces ATP from ADP in the presence of a proton gradient across the membrane. The gamma chain is believed to be important in regulating ATPase activity and the flow of protons through the CF(0) complex. The protein is ATP synthase gamma chain of Blochmanniella floridana.